The chain runs to 346 residues: Angiopoietin-related protein 7 (346 aa).

Positions 1–26 (MLKKPLSAVTWLCIFIVAFVSHPAWL) are cleaved as a signal peptide. The stretch at 39 to 119 (QLKAANCCEE…DIMQLQAAQT (81 aa)) forms a coiled coil. Asn58 is a glycosylation site (N-linked (GlcNAc...) asparagine). Residues 122-343 (QTSADAIYDC…RVEMKIRPED (222 aa)) enclose the Fibrinogen C-terminal domain. Cys131 and Cys162 are disulfide-bonded. 2 N-linked (GlcNAc...) asparagine glycosylation sites follow: Asn253 and Asn267. The cysteines at positions 285 and 298 are disulfide-linked.

In terms of assembly, homotetramer; disulfide-linked. In terms of tissue distribution, highly expressed in the cornea (at protein level). Expression is restricted to the stromal layer. Also detected at the junction between the corneal stromal layer and the conjuctiva. Not detected in the sclera.

Its subcellular location is the secreted. Its function is as follows. Has a role in the formation and organization of the extracellular matrix. In the eye, it functions as a mediator of dexamethasone-induced matrix deposition in the trabecular meshwork, the tissue responsible for the outflow of the ocular aqueous humor and for the maintenance of intraocular pressure. Is a negative regulator of angiogenesis in the cornea, and plays a major role in maintaining corneal avascularity and transparency. The chain is Angiopoietin-related protein 7 (ANGPTL7) from Homo sapiens (Human).